The sequence spans 244 residues: Glutathione S-transferase theta-2B (244 aa).

The 81-residue stretch at 2–82 (GLELFLDLVS…YLSCKYQTPD (81 aa)) folds into the GST N-terminal domain. Glutathione contacts are provided by residues 40–41 (HK), 53–54 (KL), 66–67 (ES), and 104–107 (DCIR). The GST C-terminal domain maps to 88–224 (DLQARARVHE…SILEQAAKKT (137 aa)).

The protein belongs to the GST superfamily. Theta family. As to quaternary structure, homodimer. Expressed at low levels in liver. In lung, expressed at low levels in ciliated bronchiolar cells, alveolar macrophages and alveolar type II cells.

The protein localises to the cytoplasm. Its subcellular location is the cytosol. The catalysed reaction is RX + glutathione = an S-substituted glutathione + a halide anion + H(+). Conjugation of reduced glutathione to a wide number of exogenous and endogenous hydrophobic electrophiles. Has a sulfatase activity. The chain is Glutathione S-transferase theta-2B (GSTT2B) from Homo sapiens (Human).